The following is a 424-amino-acid chain: Enolase (424 aa).

A (2R)-2-phosphoglycerate-binding site is contributed by Gln162. Residue Glu204 is the Proton donor of the active site. Mg(2+)-binding residues include Asp241, Glu284, and Asp311. Lys336, Arg365, Ser366, and Lys387 together coordinate (2R)-2-phosphoglycerate. Catalysis depends on Lys336, which acts as the Proton acceptor.

It belongs to the enolase family. Mg(2+) serves as cofactor.

It localises to the cytoplasm. The protein resides in the secreted. The protein localises to the cell surface. It carries out the reaction (2R)-2-phosphoglycerate = phosphoenolpyruvate + H2O. It functions in the pathway carbohydrate degradation; glycolysis; pyruvate from D-glyceraldehyde 3-phosphate: step 4/5. Catalyzes the reversible conversion of 2-phosphoglycerate (2-PG) into phosphoenolpyruvate (PEP). It is essential for the degradation of carbohydrates via glycolysis. This chain is Enolase, found in Sinorhizobium medicae (strain WSM419) (Ensifer medicae).